A 1193-amino-acid polypeptide reads, in one-letter code: Major DNA-binding protein (1193 aa).

The Required for filament formation motif lies at 827 to 828 (FW). The interval 1125–1145 (AGGGPAGSAGGPESGGGAGAA) is disordered. The tract at residues 1170-1193 (PTAAALDGGGDGDECAFPAKRLRL) is required for nuclear localization.

It belongs to the herpesviridae major DNA-binding protein family. Homooligomers. Forms double-helical filaments necessary for the formation of replication compartments within the host nucleus. Interacts with the origin-binding protein. Interacts with the helicase primase complex; this interaction stimulates primer synthesis activity of the helicase-primase complex. Interacts with the DNA polymerase. Interacts with the alkaline exonuclease; this interaction increases its nuclease processivity.

It localises to the host nucleus. Its function is as follows. Plays several crucial roles in viral infection. Participates in the opening of the viral DNA origin to initiate replication by interacting with the origin-binding protein. May disrupt loops, hairpins and other secondary structures present on ssDNA to reduce and eliminate pausing of viral DNA polymerase at specific sites during elongation. Promotes viral DNA recombination by performing strand-transfer, characterized by the ability to transfer a DNA strand from a linear duplex to a complementary single-stranded DNA circle. Can also catalyze the renaturation of complementary single strands. Additionally, reorganizes the host cell nucleus, leading to the formation of prereplicative sites and replication compartments. This process is driven by the protein which can form double-helical filaments in the absence of DNA. This chain is Major DNA-binding protein, found in Tupaiid herpesvirus (strain 2) (TuHV-2).